Consider the following 393-residue polypeptide: Homeobox protein knotted-1-like 4 (393 aa).

The span at methionine 1–aspartate 13 shows a compositional bias: polar residues. 2 disordered regions span residues methionine 1–tryptophan 39 and glutamine 81–glutamate 114. Residues glutamate 286–isoleucine 306 form the ELK domain. Residues leucine 307 to asparagine 370 constitute a DNA-binding region (homeobox; TALE-type). The disordered stretch occupies residues arginine 363–arginine 393. The segment covering histidine 368–serine 377 has biased composition (polar residues).

The protein belongs to the TALE/KNOX homeobox family. In terms of assembly, may form heterodimeric complex with the TALE/BELL proteins. Interacts with OFP1, OFP2, OFP4 and OFP12. Interacts with KNATM-B.

Its subcellular location is the nucleus. The sequence is that of Homeobox protein knotted-1-like 4 (KNAT4) from Arabidopsis thaliana (Mouse-ear cress).